The following is a 472-amino-acid chain: Transmembrane protein 8B (472 aa).

A disordered region spans residues Met-1–Trp-36. The Extracellular segment spans residues Met-1–Leu-233. Asn-92 and Asn-100 each carry an N-linked (GlcNAc...) asparagine glycan. An EGF-like domain is found at Phe-182 to Thr-221. Cystine bridges form between Cys-186–Cys-196, Cys-190–Cys-209, and Cys-211–Cys-220. Residues Leu-234–Ile-254 traverse the membrane as a helical segment. At Arg-255–Arg-257 the chain is on the cytoplasmic side. The helical transmembrane segment at Tyr-258–Ala-277 threads the bilayer. Residues Cys-278–Asp-292 lie on the Extracellular side of the membrane. The helical transmembrane segment at Val-293–Met-313 threads the bilayer. At Ala-314 to Arg-315 the chain is on the cytoplasmic side. A helical transmembrane segment spans residues Leu-316 to Leu-336. Over Gln-337–Gly-342 the chain is Extracellular. Residues Leu-343–Val-363 traverse the membrane as a helical segment. Topologically, residues Arg-364–Trp-379 are cytoplasmic. Residues Leu-380 to Val-400 form a helical membrane-spanning segment. Over Glu-401–Asn-405 the chain is Extracellular. A helical membrane pass occupies residues Tyr-406–Pro-426. The Cytoplasmic portion of the chain corresponds to Pro-427–Ser-472.

The protein belongs to the TMEM8 family. Isoform 2 (via its cytoplasmic part) interacts with EZR. In terms of processing, isoform 2 is N-glycosylated.

The protein localises to the cell membrane. It localises to the cytoplasm. It is found in the nucleus. The protein resides in the mitochondrion. Its subcellular location is the endoplasmic reticulum. Functionally, may function as a regulator of the EGFR pathway. Probable tumor suppressor which may function in cell growth, proliferation and adhesion. The sequence is that of Transmembrane protein 8B (TMEM8B) from Homo sapiens (Human).